We begin with the raw amino-acid sequence, 55 residues long: ATP synthase F(0) complex subunit 8 (55 aa).

A helical membrane pass occupies residues 9–29 (WFFIMIMSWAVFLLLIQPKLL).

It belongs to the ATPase protein 8 family. Component of the ATP synthase complex composed at least of ATP5F1A/subunit alpha, ATP5F1B/subunit beta, ATP5MC1/subunit c (homooctomer), MT-ATP6/subunit a, MT-ATP8/subunit 8, ATP5ME/subunit e, ATP5MF/subunit f, ATP5MG/subunit g, ATP5MK/subunit k, ATP5MJ/subunit j, ATP5F1C/subunit gamma, ATP5F1D/subunit delta, ATP5F1E/subunit epsilon, ATP5PF/subunit F6, ATP5PB/subunit b, ATP5PD/subunit d, ATP5PO/subunit OSCP. ATP synthase complex consists of a soluble F(1) head domain (subunits alpha(3) and beta(3)) - the catalytic core - and a membrane F(0) domain - the membrane proton channel (subunits c, a, 8, e, f, g, k and j). These two domains are linked by a central stalk (subunits gamma, delta, and epsilon) rotating inside the F1 region and a stationary peripheral stalk (subunits F6, b, d, and OSCP).

It is found in the mitochondrion membrane. In terms of biological role, subunit 8, of the mitochondrial membrane ATP synthase complex (F(1)F(0) ATP synthase or Complex V) that produces ATP from ADP in the presence of a proton gradient across the membrane which is generated by electron transport complexes of the respiratory chain. ATP synthase complex consist of a soluble F(1) head domain - the catalytic core - and a membrane F(1) domain - the membrane proton channel. These two domains are linked by a central stalk rotating inside the F(1) region and a stationary peripheral stalk. During catalysis, ATP synthesis in the catalytic domain of F(1) is coupled via a rotary mechanism of the central stalk subunits to proton translocation. In vivo, can only synthesize ATP although its ATP hydrolase activity can be activated artificially in vitro. Part of the complex F(0) domain. In Rhea americana (Greater rhea), this protein is ATP synthase F(0) complex subunit 8.